The primary structure comprises 641 residues: Chaperone protein DnaK (641 aa).

T199 carries the post-translational modification Phosphothreonine; by autocatalysis. Over residues 577–590 (KGDNKDEIETRTQK) the composition is skewed to basic and acidic residues. The disordered stretch occupies residues 577–641 (KGDNKDEIET…EFEEVDDKKK (65 aa)). Positions 617 to 626 (GAEQASAQQD) are enriched in low complexity. Positions 627–641 (DVVDAEFEEVDDKKK) are enriched in acidic residues.

This sequence belongs to the heat shock protein 70 family.

Its function is as follows. Acts as a chaperone. The sequence is that of Chaperone protein DnaK from Thioalkalivibrio sulfidiphilus (strain HL-EbGR7).